Reading from the N-terminus, the 54-residue chain is Ovomucoid (54 aa).

A Kazal-like domain is found at 4–54; the sequence is VDCSDHPKPVCSLEYMPLCGSDSKTYSNKCDFCNAVVESNGTLTLSHFGKC. Intrachain disulfides connect Cys-6–Cys-36, Cys-14–Cys-33, and Cys-22–Cys-54. Asn-43 carries N-linked (GlcNAc...) asparagine glycosylation.

Its subcellular location is the secreted. This Rhea americana (Greater rhea) protein is Ovomucoid.